A 417-amino-acid chain; its full sequence is Serine hydroxymethyltransferase (417 aa).

Residues L121 and 125–127 (GHL) contribute to the (6S)-5,6,7,8-tetrahydrofolate site. K229 carries the N6-(pyridoxal phosphate)lysine modification. (6S)-5,6,7,8-tetrahydrofolate is bound at residue 355–357 (SPF).

It belongs to the SHMT family. Homodimer. It depends on pyridoxal 5'-phosphate as a cofactor.

The protein resides in the cytoplasm. The catalysed reaction is (6R)-5,10-methylene-5,6,7,8-tetrahydrofolate + glycine + H2O = (6S)-5,6,7,8-tetrahydrofolate + L-serine. The protein operates within one-carbon metabolism; tetrahydrofolate interconversion. It participates in amino-acid biosynthesis; glycine biosynthesis; glycine from L-serine: step 1/1. In terms of biological role, catalyzes the reversible interconversion of serine and glycine with tetrahydrofolate (THF) serving as the one-carbon carrier. This reaction serves as the major source of one-carbon groups required for the biosynthesis of purines, thymidylate, methionine, and other important biomolecules. Also exhibits THF-independent aldolase activity toward beta-hydroxyamino acids, producing glycine and aldehydes, via a retro-aldol mechanism. The chain is Serine hydroxymethyltransferase from Shewanella sp. (strain W3-18-1).